We begin with the raw amino-acid sequence, 453 residues long: tRNA-2-methylthio-N(6)-dimethylallyladenosine synthase (453 aa).

Residues 17-135 (GTFFIETWGC…FPEYLNRAKQ (119 aa)) enclose the MTTase N-terminal domain. Residues C26, C62, C96, C172, C176, and C179 each contribute to the [4Fe-4S] cluster site. The Radical SAM core domain maps to 158-388 (RKSSTKAFVT…VEVVNKSCEK (231 aa)). Positions 391–453 (KKYQDRIVKV…LSFSLEGEEV (63 aa)) constitute a TRAM domain.

It belongs to the methylthiotransferase family. MiaB subfamily. As to quaternary structure, monomer. [4Fe-4S] cluster serves as cofactor.

The protein resides in the cytoplasm. The catalysed reaction is N(6)-dimethylallyladenosine(37) in tRNA + (sulfur carrier)-SH + AH2 + 2 S-adenosyl-L-methionine = 2-methylsulfanyl-N(6)-dimethylallyladenosine(37) in tRNA + (sulfur carrier)-H + 5'-deoxyadenosine + L-methionine + A + S-adenosyl-L-homocysteine + 2 H(+). In terms of biological role, catalyzes the methylthiolation of N6-(dimethylallyl)adenosine (i(6)A), leading to the formation of 2-methylthio-N6-(dimethylallyl)adenosine (ms(2)i(6)A) at position 37 in tRNAs that read codons beginning with uridine. The protein is tRNA-2-methylthio-N(6)-dimethylallyladenosine synthase of Clostridium tetani (strain Massachusetts / E88).